The following is a 163-amino-acid chain: HTH-type transcriptional regulator IscR (163 aa).

One can recognise an HTH rrf2-type domain in the interval 2-131; the sequence is RLTSKGRYAV…NNITLGELVN (130 aa). The H-T-H motif DNA-binding region spans 28-51; that stretch reads LADISERQGISLSYLEQLFSRLRK. The [2Fe-2S] cluster site is built by Cys92, Cys98, and Cys104. Residues 140–149 are compositionally biased toward basic and acidic residues; sequence DRQHTHDAPR. A disordered region spans residues 140-163; sequence DRQHTHDAPRSTRTQDAIDVKLRA.

Requires [2Fe-2S] cluster as cofactor.

In terms of biological role, regulates the transcription of several operons and genes involved in the biogenesis of Fe-S clusters and Fe-S-containing proteins. This Citrobacter koseri (strain ATCC BAA-895 / CDC 4225-83 / SGSC4696) protein is HTH-type transcriptional regulator IscR.